The chain runs to 1031 residues: Translation initiation factor IF-2 (1031 aa).

Disordered stretches follow at residues 33-369 and 388-436; these read KSHS…GDVL and LKPL…AESL. Residues 45-56 show a composition bias toward basic and acidic residues; that stretch reads ELVRSKLSEPRV. The span at 96 to 105 shows a compositional bias: low complexity; sequence PAPAQQQAAA. Residues 108 to 123 show a composition bias toward polar residues; sequence ASSSKPSPQRPDQLSS. Residues 148 to 171 are compositionally biased toward low complexity; sequence PAAQEPQPAAASTRPEAAAKAGSP. The span at 184–200 shows a compositional bias: pro residues; sequence VLPPPRRAASGPEPPQR. The span at 250 to 281 shows a compositional bias: basic and acidic residues; sequence TRPEPRSPVAKKEESSDSGKADEAPRPQRRLE. The span at 286–299 shows a compositional bias: pro residues; that stretch reads PTRPVAKPLPPEPD. A compositionally biased stretch (low complexity) spans 419–435; that stretch reads RPSASAEATAPEAAAES. One can recognise a tr-type G domain in the interval 522–695; that stretch reads PRPPVVTIMG…LLVADVAELQ (174 aa). Positions 531-538 are G1; that stretch reads GHVDHGKT. 531-538 contributes to the GTP binding site; that stretch reads GHVDHGKT. The G2 stretch occupies residues 556–560; that stretch reads GITQR. The G3 stretch occupies residues 581 to 584; the sequence is DTPG. GTP is bound by residues 581–585 and 635–638; these read DTPGH and NKID. The segment at 635–638 is G4; it reads NKID. The interval 671–673 is G5; the sequence is SAL.

This sequence belongs to the TRAFAC class translation factor GTPase superfamily. Classic translation factor GTPase family. IF-2 subfamily.

The protein resides in the cytoplasm. In terms of biological role, one of the essential components for the initiation of protein synthesis. Protects formylmethionyl-tRNA from spontaneous hydrolysis and promotes its binding to the 30S ribosomal subunits. Also involved in the hydrolysis of GTP during the formation of the 70S ribosomal complex. This is Translation initiation factor IF-2 from Synechococcus sp. (strain JA-3-3Ab) (Cyanobacteria bacterium Yellowstone A-Prime).